Here is a 459-residue protein sequence, read N- to C-terminus: Trigger factor (459 aa).

In terms of domain architecture, PPIase FKBP-type spans Gly-161–Pro-246.

Belongs to the FKBP-type PPIase family. Tig subfamily.

It localises to the cytoplasm. The enzyme catalyses [protein]-peptidylproline (omega=180) = [protein]-peptidylproline (omega=0). Its function is as follows. Involved in protein export. Acts as a chaperone by maintaining the newly synthesized protein in an open conformation. Functions as a peptidyl-prolyl cis-trans isomerase. In Legionella pneumophila (strain Corby), this protein is Trigger factor.